Here is a 357-residue protein sequence, read N- to C-terminus: Alanine racemase (357 aa).

Lys-34 acts as the Proton acceptor; specific for D-alanine in catalysis. Position 34 is an N6-(pyridoxal phosphate)lysine (Lys-34). Arg-127 contributes to the substrate binding site. Tyr-252 serves as the catalytic Proton acceptor; specific for L-alanine. Met-301 serves as a coordination point for substrate.

Belongs to the alanine racemase family. Pyridoxal 5'-phosphate serves as cofactor.

The catalysed reaction is L-alanine = D-alanine. It functions in the pathway amino-acid biosynthesis; D-alanine biosynthesis; D-alanine from L-alanine: step 1/1. In terms of biological role, catalyzes the interconversion of L-alanine and D-alanine. May also act on other amino acids. This Dichelobacter nodosus (strain VCS1703A) protein is Alanine racemase (alr).